The chain runs to 719 residues: Lanosterol synthase (719 aa).

The PFTB 1 repeat unit spans residues 118 to 160 (RIEVIRYLVNHANPEDGGWGIHIEGKSTVFGTALNYVVLRILG). Asp-451 serves as the catalytic Proton donor. PFTB repeat units follow at residues 478–523 (LKDS…MIEH), 555–595 (VKNA…SCVK), and 604–645 (SRRA…VVQT).

This sequence belongs to the terpene cyclase/mutase family.

The enzyme catalyses (S)-2,3-epoxysqualene = lanosterol. It participates in terpene metabolism; lanosterol biosynthesis; lanosterol from farnesyl diphosphate: step 3/3. In terms of biological role, catalyzes the cyclization of (S)-2,3 oxidosqualene to lanosterol, a reaction that forms the sterol nucleus. This Pneumocystis carinii protein is Lanosterol synthase (ERG7).